We begin with the raw amino-acid sequence, 316 residues long: 4-hydroxy-3-methylbut-2-enyl diphosphate reductase (316 aa).

Cys-12 contacts [4Fe-4S] cluster. (2E)-4-hydroxy-3-methylbut-2-enyl diphosphate-binding residues include His-41 and His-74. The dimethylallyl diphosphate site is built by His-41 and His-74. Residues His-41 and His-74 each contribute to the isopentenyl diphosphate site. Cys-96 contacts [4Fe-4S] cluster. His-124 serves as a coordination point for (2E)-4-hydroxy-3-methylbut-2-enyl diphosphate. His-124 contributes to the dimethylallyl diphosphate binding site. His-124 provides a ligand contact to isopentenyl diphosphate. Glu-126 acts as the Proton donor in catalysis. Thr-169 contacts (2E)-4-hydroxy-3-methylbut-2-enyl diphosphate. Cys-199 lines the [4Fe-4S] cluster pocket. The (2E)-4-hydroxy-3-methylbut-2-enyl diphosphate site is built by Ser-227, Ser-228, Asn-229, and Ser-271. Positions 227, 228, 229, and 271 each coordinate dimethylallyl diphosphate. Residues Ser-227, Ser-228, Asn-229, and Ser-271 each coordinate isopentenyl diphosphate.

This sequence belongs to the IspH family. Requires [4Fe-4S] cluster as cofactor.

The catalysed reaction is isopentenyl diphosphate + 2 oxidized [2Fe-2S]-[ferredoxin] + H2O = (2E)-4-hydroxy-3-methylbut-2-enyl diphosphate + 2 reduced [2Fe-2S]-[ferredoxin] + 2 H(+). It carries out the reaction dimethylallyl diphosphate + 2 oxidized [2Fe-2S]-[ferredoxin] + H2O = (2E)-4-hydroxy-3-methylbut-2-enyl diphosphate + 2 reduced [2Fe-2S]-[ferredoxin] + 2 H(+). The protein operates within isoprenoid biosynthesis; dimethylallyl diphosphate biosynthesis; dimethylallyl diphosphate from (2E)-4-hydroxy-3-methylbutenyl diphosphate: step 1/1. Its pathway is isoprenoid biosynthesis; isopentenyl diphosphate biosynthesis via DXP pathway; isopentenyl diphosphate from 1-deoxy-D-xylulose 5-phosphate: step 6/6. Functionally, catalyzes the conversion of 1-hydroxy-2-methyl-2-(E)-butenyl 4-diphosphate (HMBPP) into a mixture of isopentenyl diphosphate (IPP) and dimethylallyl diphosphate (DMAPP). Acts in the terminal step of the DOXP/MEP pathway for isoprenoid precursor biosynthesis. In Xylella fastidiosa (strain M12), this protein is 4-hydroxy-3-methylbut-2-enyl diphosphate reductase.